The primary structure comprises 371 residues: Protein SPATA31F3 (371 aa).

A helical membrane pass occupies residues 7 to 29 (ILWDVGSSVYTYGSLFIIALIIW). Residues 62–86 (LRVKKRTTKEETEKLQKLLSNMKRQ) adopt a coiled-coil conformation. 2 stretches are compositionally biased toward polar residues: residues 189 to 203 (LSKV…LSSQ) and 244 to 266 (PQQQ…SSSS). Disordered regions lie at residues 189 to 222 (LSKV…STDQ), 240 to 299 (YHPA…EAEM), and 326 to 371 (YKSE…KRNI). Ser197 and Ser198 each carry phosphoserine. Positions 277–287 (QKKRKKTKKLV) are enriched in basic residues. Residues 330–362 (TGAKPKTGEPKKSSAKVRAEEPNLEKHAKDLKA) are compositionally biased toward basic and acidic residues.

Belongs to the SPATA31 family.

It localises to the membrane. The polypeptide is Protein SPATA31F3 (Spata31f3) (Mus musculus (Mouse)).